Here is a 195-residue protein sequence, read N- to C-terminus: Nascent polypeptide-associated complex subunit alpha (195 aa).

2 disordered regions span residues 1-59 and 132-153; these read MTGS…SRSE and TREA…EEDS. Over residues 7–16 the composition is skewed to basic and acidic residues; sequence TRQKEVKEPQ. A compositionally biased stretch (acidic residues) spans 19–33; sequence VSDDSDNEAVEQELT. The span at 47–59 shows a compositional bias: basic and acidic residues; it reads DHIDKQAKQSRSE. The 66-residue stretch at 56 to 121 folds into the NAC-A/B domain; that stretch reads SRSEKKARKL…AKIEDLTQHA (66 aa). The segment covering 142–153 has biased composition (acidic residues); that stretch reads EEDENEDVEEDS.

It belongs to the NAC-alpha family. In terms of assembly, may be part of the nascent polypeptide-associated complex (NAC), which is a heterodimer of icd-2 and icd-1 (via NAC-A/B domains).

It is found in the cytoplasm. Its function is as follows. May prevent inappropriate targeting of non-secretory polypeptides to the endoplasmic reticulum (ER). Plays a role in the response to heat stress. The protein is Nascent polypeptide-associated complex subunit alpha of Caenorhabditis elegans.